The chain runs to 189 residues: MNPVATLFLAFAMSTDAFAAAIGKGATLNRPHWREAVRTGLIFGVIEALTPLVGWFLGKAAAQYVSAWDHWIAFSLLLVLGARMVFNSFNTKEVEETKPSAHSFWLLALTGFATSIDAMAVGAGLAFVDVNIYSTAAAIGLATMAMVTIGVMLGRVIGHVAGRRAELAGGIVLIGIGSTILAEHLNIFG.

6 helical membrane passes run 3–23 (PVAT…AAIG), 41–61 (LIFG…GKAA), 62–82 (AQYV…VLGA), 104–124 (FWLL…VGAG), 132–152 (IYST…IGVM), and 168–188 (AGGI…LNIF).

It belongs to the MntP (TC 9.B.29) family.

The protein resides in the cell inner membrane. Functionally, probably functions as a manganese efflux pump. The chain is Putative manganese efflux pump MntP from Paraburkholderia phytofirmans (strain DSM 17436 / LMG 22146 / PsJN) (Burkholderia phytofirmans).